An 87-amino-acid chain; its full sequence is UPF0473 protein Daud_0916 (87 aa).

This sequence belongs to the UPF0473 family.

In Desulforudis audaxviator (strain MP104C), this protein is UPF0473 protein Daud_0916.